The following is a 424-amino-acid chain: MKNFLRKSIAAQSYSKMFSQGTSFKSLNLSLEAPSGARSSFRSLEHLDKVSRHYISEIIQKVHPLSSDERHLLSIIINSNFNFRHQSNSNLSNIILNIKSFDKIQSENIQTHKNTYSEDIKEISNHDFVFFGVEISNHQEKLPLNKTHHTVDFGANAYIIDHDSPYGYMTLTDHFDNAIPPVFYHEHQSFFLDNFKEVVDEVSRYVHGNQGKTDVPIFNTKDMRLGIGLHLIDFIRKSKDQGFREFCYNKNIDPVSLDRIINFVFQLEYHIPRMLSTDNFKKIKLRDISLEDAIKASNYEEINNKVTDKKMAHQALAYSLGNKKADIALYLLSKFNFTKQDVAEMEKMKNNRYCNLYDVEYLLSKDGANYKVLEYFINNGLVDVNKKFQKANSGDTMLDNAMKSKDSKMIDFFIKKWSGIRQTI.

Residues histidine 85, glutamine 86, serine 87, leucine 91, isoleucine 104, asparagine 114, phenylalanine 130, histidine 148, phenylalanine 153, aspartate 173, and glutamate 268 each coordinate NAD(+). Residue glutamate 268 is part of the active site. 3 ANK repeats span residues 311-340, 355-386, and 393-422; these read MAHQALAYSLGNKKADIALYLLSKFNFTKQ, NLYDVEYLLSKDGANYKVLEYFINNGLVDVNK, and SGDTMLDNAMKSKDSKMIDFFIKKWSGIRQ.

The protein belongs to the OspC family.

It localises to the secreted. It is found in the host cytoplasm. It catalyses the reaction L-arginyl-[protein] + NAD(+) = ADP-riboxanated L-argininyl-[protein] + nicotinamide + NH4(+) + H(+). In terms of biological role, ADP-riboxanase effector that mediates arginine ADP-riboxanation of host caspase CASP4/CASP11, thereby inhibiting pyroptosis. The protein is Arginine ADP-riboxanase OspC4 of Shigella flexneri.